Reading from the N-terminus, the 261-residue chain is uncharacterized protein (261 aa).

Residues 1-22 form the signal peptide; it reads MKYYGKCISYISILILTFFIGG. Residue C23 is the site of N-palmitoyl cysteine attachment. C23 is lipidated: S-diacylglycerol cysteine.

This sequence belongs to the staphylococcal tandem lipoprotein family.

It localises to the cell membrane. This is an uncharacterized protein from Staphylococcus epidermidis (strain ATCC 12228 / FDA PCI 1200).